Consider the following 649-residue polypeptide: Solute carrier family 22 member 16 (649 aa).

Residues 19–39 (FQIVLYLICAYQSLSCGIHYL) form a helical membrane-spanning segment. Asn-65 and Asn-108 each carry an N-linked (GlcNAc...) asparagine glycan. A run of 5 helical transmembrane segments spans residues 156-176 (MIQP…SYLS), 190-210 (IGVF…SFMI), 214-234 (FLVM…MEII), 244-264 (IHLN…SYLL), and 268-288 (WLYQ…CWML). Asn-315 is a glycosylation site (N-linked (GlcNAc...) asparagine). 6 helical membrane passes run 356–376 (AKMT…YYMF), 389–409 (LYLL…CIWL), 417–437 (TMLL…VMPS), 445–465 (MVAL…YLYT), 475–495 (CLAV…IPFT), and 501–521 (VWIF…GLLS). Over residues 530 to 544 (TPMKSTWETTEQQVP) the composition is skewed to polar residues. Disordered stretches follow at residues 530 to 560 (TPMK…SFER) and 579 to 649 (SPDA…LGGF).

Belongs to the major facilitator (TC 2.A.1) superfamily. Organic cation transporter (TC 2.A.1.19) family.

The protein resides in the cell membrane. The catalysed reaction is (R)-carnitine(in) = (R)-carnitine(out). It carries out the reaction spermidine(in) = spermidine(out). Its function is as follows. Facilitative organic cation transporter that mediates the transport of carnitine as well as the polyamine spermidine. Mediates the partially Na(+)-dependent bidirectional transport of carnitine. May mediate L-carnitine secretion from testis epididymal epithelium into the lumen which is involved in the maturation of spermatozoa. This Mus musculus (Mouse) protein is Solute carrier family 22 member 16.